A 423-amino-acid polypeptide reads, in one-letter code: Gamma-glutamyl phosphate reductase (423 aa).

Belongs to the gamma-glutamyl phosphate reductase family.

The protein resides in the cytoplasm. It carries out the reaction L-glutamate 5-semialdehyde + phosphate + NADP(+) = L-glutamyl 5-phosphate + NADPH + H(+). Its pathway is amino-acid biosynthesis; L-proline biosynthesis; L-glutamate 5-semialdehyde from L-glutamate: step 2/2. Functionally, catalyzes the NADPH-dependent reduction of L-glutamate 5-phosphate into L-glutamate 5-semialdehyde and phosphate. The product spontaneously undergoes cyclization to form 1-pyrroline-5-carboxylate. The chain is Gamma-glutamyl phosphate reductase from Paraburkholderia phymatum (strain DSM 17167 / CIP 108236 / LMG 21445 / STM815) (Burkholderia phymatum).